A 366-amino-acid polypeptide reads, in one-letter code: NADH-quinone oxidoreductase subunit D (366 aa).

The protein belongs to the complex I 49 kDa subunit family. NDH-1 is composed of 14 different subunits. Subunits NuoB, C, D, E, F, and G constitute the peripheral sector of the complex.

Its subcellular location is the cell membrane. The catalysed reaction is a quinone + NADH + 5 H(+)(in) = a quinol + NAD(+) + 4 H(+)(out). Functionally, NDH-1 shuttles electrons from NADH, via FMN and iron-sulfur (Fe-S) centers, to quinones in the respiratory chain. The immediate electron acceptor for the enzyme in this species is believed to be a menaquinone. Couples the redox reaction to proton translocation (for every two electrons transferred, four hydrogen ions are translocated across the cytoplasmic membrane), and thus conserves the redox energy in a proton gradient. This Bacillus thuringiensis (strain Al Hakam) protein is NADH-quinone oxidoreductase subunit D.